The chain runs to 341 residues: Large ribosomal subunit protein uL29m (341 aa).

The disordered stretch occupies residues Leu44–Asp74. Positions Arg48 to Val62 are enriched in basic residues.

Belongs to the universal ribosomal protein uL29 family. As to quaternary structure, component of the mitochondrial large ribosomal subunit. Mature mitochondrial ribosomes consist of a small (37S) and a large (54S) subunit. The 37S subunit contains at least 33 different proteins and 1 molecule of RNA (15S). The 54S subunit contains at least 45 different proteins and 1 molecule of RNA (21S).

It localises to the mitochondrion. This is Large ribosomal subunit protein uL29m (MRPL4) from Eremothecium gossypii (strain ATCC 10895 / CBS 109.51 / FGSC 9923 / NRRL Y-1056) (Yeast).